Here is a 969-residue protein sequence, read N- to C-terminus: Alpha-glucosidase (969 aa).

The first 24 residues, 1–24 (MMISTAYQSLFLTALFSAISIAVG), serve as a signal peptide directing secretion. N-linked (GlcNAc...) asparagine glycosylation is found at asparagine 37, asparagine 67, asparagine 99, asparagine 116, asparagine 139, asparagine 146, asparagine 209, asparagine 245, asparagine 249, asparagine 331, asparagine 406, asparagine 429, asparagine 462, and asparagine 470. Aspartate 481 functions as the Nucleophile in the catalytic mechanism. The active site involves glutamate 484. Residues asparagine 520, asparagine 523, and asparagine 589 are each glycosylated (N-linked (GlcNAc...) asparagine). Aspartate 647 acts as the Proton donor in catalysis. N-linked (GlcNAc...) asparagine glycosylation is found at asparagine 648, asparagine 801, asparagine 810, asparagine 821, asparagine 885, asparagine 915, asparagine 934, asparagine 942, asparagine 954, and asparagine 966.

This sequence belongs to the glycosyl hydrolase 31 family.

The protein resides in the secreted. The catalysed reaction is Hydrolysis of terminal, non-reducing (1-&gt;4)-linked alpha-D-glucose residues with release of alpha-D-glucose.. Functionally, hydrolyzes malto-oligosaccharides, but has a low activity toward soluble starch. The protein is Alpha-glucosidase (agl1) of Schizosaccharomyces pombe (strain 972 / ATCC 24843) (Fission yeast).